Consider the following 294-residue polypeptide: Nucleophosmin (294 aa).

Residues 121–133 (LEEEPESEDEEED) are compositionally biased toward acidic residues. Residues 121–244 (LEEEPESEDE…PKTPKVPLSL (124 aa)) are disordered. Residues 153 to 158 (PQKKPK) carry the Nuclear localization signal motif. The span at 161–186 (EDDEDDDEDEDDDEDDEDDLDDDEEE) shows a compositional bias: acidic residues. A Nuclear localization signal motif is present at residues 190-196 (PMKKPAR). The span at 223–233 (KTPDSKKDKSL) shows a compositional bias: basic and acidic residues.

The protein belongs to the nucleoplasmin family. In terms of assembly, decamer formed by two pentameric rings associated in a head-to-head fashion. Post-translationally, phosphorylated.

The protein localises to the cytoplasm. The protein resides in the nucleus. It localises to the nucleoplasm. It is found in the nucleolus. Its function is as follows. Acts as a chaperonin for the core histones H3, H2B and H4. Associated with nucleolar ribonucleoprotein structures and bind single-stranded nucleic acids. It may function in the assembly and/or transport of ribosome. May stimulate endonuclease activity on apurinic/apyrimidinic (AP) double-stranded DNA. May inhibit endonuclease activity on AP single-stranded RNA. The sequence is that of Nucleophosmin (NPM1) from Gallus gallus (Chicken).